We begin with the raw amino-acid sequence, 647 residues long: DNA mismatch repair protein MutL (647 aa).

The span at 387–400 (SAKPVHEATDEKAE) shows a compositional bias: basic and acidic residues. The interval 387–412 (SAKPVHEATDEKAEPQSTSVKFAERK) is disordered.

The protein belongs to the DNA mismatch repair MutL/HexB family.

Its function is as follows. This protein is involved in the repair of mismatches in DNA. It is required for dam-dependent methyl-directed DNA mismatch repair. May act as a 'molecular matchmaker', a protein that promotes the formation of a stable complex between two or more DNA-binding proteins in an ATP-dependent manner without itself being part of a final effector complex. This chain is DNA mismatch repair protein MutL, found in Streptococcus sanguinis (strain SK36).